A 245-amino-acid polypeptide reads, in one-letter code: uncharacterized protein (245 aa).

Over residues 162 to 174 (KEQSDVTTSERTR) the composition is skewed to basic and acidic residues. The disordered stretch occupies residues 162–183 (KEQSDVTTSERTRSPPGSSKTT).

This is an uncharacterized protein from Homo sapiens (Human).